We begin with the raw amino-acid sequence, 311 residues long: T-cell acute lymphocytic leukemia protein 1 homolog (311 aa).

The segment covering M1–S14 has biased composition (pro residues). The disordered stretch occupies residues M1–A67. Residues D15–E25 show a composition bias toward basic and acidic residues. The bHLH domain maps to V179–L231. The segment at S265–R311 is disordered. The segment covering T284–H294 has biased composition (basic and acidic residues).

Efficient DNA binding requires dimerization with another bHLH protein. Forms heterodimers with TCF3. In terms of processing, phosphorylated on serine residues.

It localises to the nucleus. Implicated in the genesis of hemopoietic malignancies. It may play an important role in hemopoietic differentiation. The chain is T-cell acute lymphocytic leukemia protein 1 homolog (TAL1) from Gallus gallus (Chicken).